We begin with the raw amino-acid sequence, 148 residues long: NADPH-dependent 7-cyano-7-deazaguanine reductase (148 aa).

Catalysis depends on Cys50, which acts as the Thioimide intermediate. Asp57 functions as the Proton donor in the catalytic mechanism. Residues 72–74 and 91–92 contribute to the substrate site; these read VES and HE.

Belongs to the GTP cyclohydrolase I family. QueF type 1 subfamily.

It localises to the cytoplasm. It carries out the reaction 7-aminomethyl-7-carbaguanine + 2 NADP(+) = 7-cyano-7-deazaguanine + 2 NADPH + 3 H(+). It participates in tRNA modification; tRNA-queuosine biosynthesis. Its function is as follows. Catalyzes the NADPH-dependent reduction of 7-cyano-7-deazaguanine (preQ0) to 7-aminomethyl-7-deazaguanine (preQ1). This is NADPH-dependent 7-cyano-7-deazaguanine reductase from Helicobacter pylori (strain P12).